Here is a 291-residue protein sequence, read N- to C-terminus: AA14 family lytic polysaccharide monooxygenase (291 aa).

Residues 1–17 (MLTTAILFTSLAGSAYA) form the signal peptide. The N-linked (GlcNAc...) asparagine glycan is linked to Asn-141. 3 disulfides stabilise this stretch: Cys-192-Cys-197, Cys-199-Cys-220, and Cys-240-Cys-247.

It belongs to the polysaccharide monooxygenase AA14 family. Cu(2+) is required as a cofactor.

The protein localises to the secreted. In terms of biological role, lytic polysaccharide monooxygenase (LPMO) that is active against heteroxylan, xyloglucan and cellulose in beta-cellulose and released native oligosaccharides and corresponding C1- and/or C4-oxidized products. May act mainly on heteroxylan with numerous arabinosyl substituents between cellulose fibers rather than on recalcitrant xylan tightly associated with cellulose. Catalysis by LPMOs requires the reduction of the active-site copper from Cu(II) to Cu(I) by a reducing agent and H(2)O(2) or O(2) as a cosubstrate. Shows a branched chain preference, and has synergistic effects with the Penicillium parvum debranching enzyme ABF62C in an enzyme- and ascorbic acid-dependent manner. Also has synergistic effects with the Penicillium parvum GH10 endoxylanase XYN1, and the degree of synergy was greater with step-by-step addition than with simultaneous addition. The chain is AA14 family lytic polysaccharide monooxygenase from Sordaria brevicollis.